The chain runs to 293 residues: MAYHSAYGVHGSKHRTRAAPDPPPLFDDTSGGYSSQLGGYPAPGADVAFSVNNLLGDPVANMAMAYGTSIASQGKDIVHKELHRFVSVNKLKYFFAVDTAYVAKKLGLLVFPYTHQNWKMQYSHDVPLPPRKDLNAPDLYIPTMAFITYVLLAGMALGIQQRFSPEVLGLCASTALVWVFMEVLALLLGLYLATVRSELSTFHLLAYSGYKYVGMILSVLTGLLFGSDGYYVALAWTSSALMYFIVRSLRTAASGPDSMGGPAPRQRLQLYLTLGAAAFQPLIIYWLTFHLVR.

The disordered stretch occupies residues 1–27; that stretch reads MAYHSAYGVHGSKHRTRAAPDPPPLFD. The residue at position 2 (Ala-2) is an N-acetylalanine. The Cytoplasmic segment spans residues 2–138; it reads AYHSAYGVHG…PPRKDLNAPD (137 aa). Ser-12 is subject to Phosphoserine. The helical transmembrane segment at 139–159 threads the bilayer; the sequence is LYIPTMAFITYVLLAGMALGI. At 160 to 174 the chain is on the lumenal side; it reads QQRFSPEVLGLCAST. Residues 175 to 195 traverse the membrane as a helical segment; that stretch reads ALVWVFMEVLALLLGLYLATV. The Cytoplasmic segment spans residues 196 to 203; the sequence is RSELSTFH. Residues 204–226 traverse the membrane as a helical segment; the sequence is LLAYSGYKYVGMILSVLTGLLFG. The Lumenal portion of the chain corresponds to 227–229; sequence SDG. The chain crosses the membrane as a helical span at residues 230-249; that stretch reads YYVALAWTSSALMYFIVRSL. Residues 250–271 are Cytoplasmic-facing; sequence RTAASGPDSMGGPAPRQRLQLY. Residues 272–292 traverse the membrane as a helical segment; the sequence is LTLGAAAFQPLIIYWLTFHLV.

This sequence belongs to the YIF1 family. In terms of assembly, interacts with YIPF5.

The protein localises to the endoplasmic reticulum membrane. It localises to the golgi apparatus membrane. The protein resides in the endoplasmic reticulum-Golgi intermediate compartment membrane. Its function is as follows. Possible role in transport between endoplasmic reticulum and Golgi. The protein is Protein YIF1A (Yif1a) of Mus musculus (Mouse).